Here is a 62-residue protein sequence, read N- to C-terminus: ATP synthase subunit J, mitochondrial (62 aa).

The helical transmembrane segment at 13–32 (IVKPLWPYAVGGVITFFLFA) threads the bilayer.

In terms of assembly, F-type ATP synthases have 2 components, the catalytic core F(1) and the membrane-embedded component F(0), linked together by a central stalk and a peripheral stalk. The central stalk, also called rotor shaft, is often seen as part of F(1). The peripheral stalk is seen as part of F(0). F(0) contains the membrane channel next to the rotor. F-type ATP synthases form dimers but each monomer functions independently in ATP generation. The dimer consists of 17 different polypeptides: ATP1 (subunit alpha, 3 molecules per monomer, part of F(1)), ATP2 (subunit beta, 3 copies per monomer, part of F(1)), ATP3 (subunit gamma, part of the central stalk), ATP4 (subunit b, part of the peripheral stalk), ATP5/OSCP (subunit 5/OSCP, part of the peripheral stalk), ATP6 (subunit a, part of the peripheral stalk), ATP7 (subunit d, part of the peripheral stalk), ATP8 (subunit 8, part of the peripheral stalk), OLI1 (subunit c, part of the rotor, 10 molecules per monomer), ATP14 (subunit h, part of the peripheral stalk), ATP15 (subunit epsilon, part of the central stalk), ATP16 (subunit delta, part of the central stalk), ATP17 (subunit f, part of the peripheral stalk), ATP18 (subunit i/j, part of the peripheral stalk), ATP19 (subunit k, dimer-specific, at interface between monomers), ATP20 (subunit g, at interface between monomers), TIM11 (subunit e, at interface between monomers).

The protein localises to the mitochondrion inner membrane. In terms of biological role, mitochondrial membrane ATP synthase (F(1)F(0) ATP synthase or Complex V) produces ATP from ADP in the presence of a proton gradient across the membrane which is generated by electron transport complexes of the respiratory chain. F-type ATP synthases consist of two structural domains, F(1) - containing the extramembraneous catalytic core, and F(0) - containing the membrane proton channel, linked together by a central stalk and a peripheral stalk. During catalysis, ATP synthesis in the catalytic domain of F(1) is coupled via a rotary mechanism of the central stalk subunits to proton translocation. Part of the complex F(0) domain. Minor subunit located with subunit a/ATP6 in the membrane. The protein is ATP synthase subunit J, mitochondrial of Yarrowia lipolytica (strain CLIB 122 / E 150) (Yeast).